A 713-amino-acid polypeptide reads, in one-letter code: Ribosomal RNA large subunit methyltransferase K/L (713 aa).

Residues 43-154 (LAYRITLWTR…NGVITIAMNF (112 aa)) form the THUMP domain.

The protein belongs to the methyltransferase superfamily. RlmKL family.

The protein resides in the cytoplasm. The catalysed reaction is guanosine(2445) in 23S rRNA + S-adenosyl-L-methionine = N(2)-methylguanosine(2445) in 23S rRNA + S-adenosyl-L-homocysteine + H(+). It carries out the reaction guanosine(2069) in 23S rRNA + S-adenosyl-L-methionine = N(2)-methylguanosine(2069) in 23S rRNA + S-adenosyl-L-homocysteine + H(+). In terms of biological role, specifically methylates the guanine in position 2445 (m2G2445) and the guanine in position 2069 (m7G2069) of 23S rRNA. This is Ribosomal RNA large subunit methyltransferase K/L from Shewanella sp. (strain MR-7).